A 377-amino-acid chain; its full sequence is MGIKGLNAIISEHVPSAVRKSDIKTFFGRKVAIDASMSLYQFLIAVRQQDGGQLTNEAGETTSHLMGMFYRTLRMIDNGIKPCYVFDGKPPVLKSHELSKRTARREETEKKLQEATDQAEKMKQERRLVKVSKEHNDEAKQLLELMGIPYITAPCEAESQCAELAKCGKVYAAASEDMDTLCYRTPYLLRHLTFSEAKKEPIHEIDTELVLKGLDLTLEQFVDLGIMLGCDYCDSIKGVGPVTALKLIKEYGSLEKIIEYIESDSSNSKWKIPNDWPYKDARELFLKPDVINGNEVELKWQPPNEKGLIDFLCGEKKFSEERVKSGIERLKKGLKSGVQGRLDGFFQVVPKTKEQLAKAAAKAKAAKKSGKVTKKRR.

An N-domain region spans residues 1 to 105 (MGIKGLNAII…HELSKRTARR (105 aa)). D34 is a Mg(2+) binding site. DNA is bound by residues R47 and R71. D87 serves as a coordination point for Mg(2+). The disordered stretch occupies residues 99–119 (SKRTARREETEKKLQEATDQA). Residues 120–251 (EKMKQERRLV…VTALKLIKEY (132 aa)) are I-domain. Mg(2+) is bound by residues E156, E158, D177, and D179. E156 lines the DNA pocket. G229 and D231 together coordinate DNA. D231 serves as a coordination point for Mg(2+). The interval 338 to 346 (VQGRLDGFF) is interaction with PCNA.

Belongs to the XPG/RAD2 endonuclease family. FEN1 subfamily. Interacts with PCNA. Three molecules of FEN1 bind to one PCNA trimer with each molecule binding to one PCNA monomer. PCNA stimulates the nuclease activity without altering cleavage specificity. Requires Mg(2+) as cofactor. Post-translationally, phosphorylated. Phosphorylation upon DNA damage induces relocalization to the nuclear plasma.

The protein localises to the nucleus. The protein resides in the nucleolus. It is found in the nucleoplasm. It localises to the mitochondrion. Functionally, structure-specific nuclease with 5'-flap endonuclease and 5'-3' exonuclease activities involved in DNA replication and repair. During DNA replication, cleaves the 5'-overhanging flap structure that is generated by displacement synthesis when DNA polymerase encounters the 5'-end of a downstream Okazaki fragment. It enters the flap from the 5'-end and then tracks to cleave the flap base, leaving a nick for ligation. Also involved in the long patch base excision repair (LP-BER) pathway, by cleaving within the apurinic/apyrimidinic (AP) site-terminated flap. Acts as a genome stabilization factor that prevents flaps from equilibrating into structures that lead to duplications and deletions. Also possesses 5'-3' exonuclease activity on nicked or gapped double-stranded DNA, and exhibits RNase H activity. Also involved in replication and repair of rDNA and in repairing mitochondrial DNA. The protein is Flap endonuclease 1 of Vanderwaltozyma polyspora (strain ATCC 22028 / DSM 70294 / BCRC 21397 / CBS 2163 / NBRC 10782 / NRRL Y-8283 / UCD 57-17) (Kluyveromyces polysporus).